Here is a 775-residue protein sequence, read N- to C-terminus: Aconitate hydratase, mitochondrial (775 aa).

The transit peptide at 1–25 (MLTTLARASAMLLGARGFASAADLD) directs the protein to the mitochondrion. Substrate is bound by residues Q95 and 188 to 190 (DSH). N-linked (GlcNAc...) asparagine glycosylation is present at N337. [4Fe-4S] cluster is bound at residue C381. N383 is a glycosylation site (N-linked (GlcNAc...) asparagine). Residues C444 and C447 each coordinate [4Fe-4S] cluster. R470 provides a ligand contact to substrate. N-linked (GlcNAc...) asparagine glycosylation is present at N471. 2 residues coordinate substrate: R475 and R603. Residue N608 is glycosylated (N-linked (GlcNAc...) asparagine). 666 to 667 (SR) provides a ligand contact to substrate. N-linked (GlcNAc...) asparagine glycosylation is found at N754 and N763.

The protein belongs to the aconitase/IPM isomerase family. Monomer. It depends on [4Fe-4S] cluster as a cofactor.

Its subcellular location is the mitochondrion. It carries out the reaction citrate = D-threo-isocitrate. Its pathway is carbohydrate metabolism; tricarboxylic acid cycle; isocitrate from oxaloacetate: step 2/2. Functionally, catalyzes the isomerization of citrate to isocitrate via cis-aconitate. This chain is Aconitate hydratase, mitochondrial, found in Arthroderma benhamiae (strain ATCC MYA-4681 / CBS 112371) (Trichophyton mentagrophytes).